Consider the following 919-residue polypeptide: Phosphoenolpyruvate carboxylase (919 aa).

Residues His-138 and Lys-579 contribute to the active site.

The protein belongs to the PEPCase type 1 family. The cofactor is Mg(2+).

It catalyses the reaction oxaloacetate + phosphate = phosphoenolpyruvate + hydrogencarbonate. Its function is as follows. Forms oxaloacetate, a four-carbon dicarboxylic acid source for the tricarboxylic acid cycle. The sequence is that of Phosphoenolpyruvate carboxylase from Corynebacterium glutamicum (Brevibacterium saccharolyticum).